The chain runs to 484 residues: Adenylyltransferase and sulfurtransferase uba4 (484 aa).

The span at 39–49 shows a compositional bias: low complexity; that stretch reads AKAQSAAATTA. Positions 39–58 are disordered; that stretch reads AKAQSAAATTAGDNHDKPRR. ATP-binding positions include Gly-98, Asp-119, 126–130, Lys-143, and 187–188; these read SNLHR and DN. 2 residues coordinate Zn(2+): Cys-236 and Cys-239. Cys-253 functions as the Glycyl thioester intermediate; for adenylyltransferase activity in the catalytic mechanism. Zn(2+) contacts are provided by Cys-313 and Cys-316. The region spanning 370 to 482 is the Rhodanese domain; sequence PEKTPTLIDV…WREQVDPEWP (113 aa). Cys-437 (cysteine persulfide intermediate; for sulfurtransferase activity) is an active-site residue.

This sequence in the N-terminal section; belongs to the HesA/MoeB/ThiF family. UBA4 subfamily. Requires Zn(2+) as cofactor.

It localises to the cytoplasm. Its subcellular location is the cytosol. It catalyses the reaction [molybdopterin-synthase sulfur-carrier protein]-C-terminal Gly-Gly + ATP + H(+) = [molybdopterin-synthase sulfur-carrier protein]-C-terminal Gly-Gly-AMP + diphosphate. The enzyme catalyses [molybdopterin-synthase sulfur-carrier protein]-C-terminal Gly-Gly-AMP + S-sulfanyl-L-cysteinyl-[cysteine desulfurase] + AH2 = [molybdopterin-synthase sulfur-carrier protein]-C-terminal-Gly-aminoethanethioate + L-cysteinyl-[cysteine desulfurase] + A + AMP + 2 H(+). Its pathway is tRNA modification; 5-methoxycarbonylmethyl-2-thiouridine-tRNA biosynthesis. It functions in the pathway cofactor biosynthesis; molybdopterin biosynthesis. Plays a central role in 2-thiolation of mcm(5)S(2)U at tRNA wobble positions of cytosolic tRNA(Lys), tRNA(Glu) and tRNA(Gln). Also essential during biosynthesis of the molybdenum cofactor. Acts by mediating the C-terminal thiocarboxylation of sulfur carriers urm1 and mocs2a. Its N-terminus first activates urm1 and mocs2a as acyl-adenylates (-COAMP), then the persulfide sulfur on the catalytic cysteine is transferred to urm1 and mocs2a to form thiocarboxylation (-COSH) of their C-terminus. The reaction probably involves hydrogen sulfide that is generated from the persulfide intermediate and that acts as a nucleophile towards urm1 and mocs2a. Subsequently, a transient disulfide bond is formed. Does not use thiosulfate as sulfur donor; nfs1 probably acting as a sulfur donor for thiocarboxylation reactions. This chain is Adenylyltransferase and sulfurtransferase uba4, found in Aspergillus terreus (strain NIH 2624 / FGSC A1156).